Here is a 368-residue protein sequence, read N- to C-terminus: tRNA/tmRNA (uracil-C(5))-methyltransferase (368 aa).

5 residues coordinate S-adenosyl-L-methionine: glutamine 190, tyrosine 218, asparagine 223, glutamate 239, and aspartate 301. Residue cysteine 326 is the Nucleophile of the active site. Glutamate 360 acts as the Proton acceptor in catalysis.

It belongs to the class I-like SAM-binding methyltransferase superfamily. RNA M5U methyltransferase family. TrmA subfamily.

The catalysed reaction is uridine(54) in tRNA + S-adenosyl-L-methionine = 5-methyluridine(54) in tRNA + S-adenosyl-L-homocysteine + H(+). It catalyses the reaction uridine(341) in tmRNA + S-adenosyl-L-methionine = 5-methyluridine(341) in tmRNA + S-adenosyl-L-homocysteine + H(+). Dual-specificity methyltransferase that catalyzes the formation of 5-methyluridine at position 54 (m5U54) in all tRNAs, and that of position 341 (m5U341) in tmRNA (transfer-mRNA). In Photobacterium profundum (strain SS9), this protein is tRNA/tmRNA (uracil-C(5))-methyltransferase.